The chain runs to 500 residues: Oogenesin-3 (500 aa).

One copy of the LRR 1; degenerate repeat lies at 116–143 (RCKLRVLKWRDEQHDFCGIWPGSHEAED). Residues 198 to 222 (HLLCRKLVIETLTKDTVIEIFKIVN) form an LRR 2; degenerate repeat. One copy of the LRR 3; degenerate repeat lies at 223–248 (ADCIQELELYSLCLEDLAFLNPYLRQ). Residues 249 to 285 (MDNLLELTLDHVTDSLSMGDSEMCEEEMITLVSQLPT) form an LRR 4; degenerate repeat. 5 LRR repeats span residues 286–311 (FPCL…LRCL), 312–343 (KKPL…FELK), 344–367 (CLYL…LESV), 368–395 (RHTL…ALSQ), and 396–420 (CSHL…LLQH).

It belongs to the PRAME family. As to expression, expressed in ovary, specifically in oocytes. Detected in follicles with two layers of granulosa cells, and are present in early as well as large antral follicles.

The chain is Oogenesin-3 from Mus musculus (Mouse).